A 623-amino-acid polypeptide reads, in one-letter code: V-type proton ATPase catalytic subunit A (623 aa).

An ATP-binding site is contributed by 252 to 259; the sequence is GAFGCGKT.

Belongs to the ATPase alpha/beta chains family. V-ATPase is a heteromultimeric enzyme composed of a peripheral catalytic V1 complex (components A to H) attached to an integral membrane V0 proton pore complex (components: a, c, c'', d and e). Binds to the deubiquitinating enzyme AMSH3.

It is found in the vacuole membrane. The catalysed reaction is ATP + H2O + 4 H(+)(in) = ADP + phosphate + 5 H(+)(out). In terms of biological role, catalytic subunit of the peripheral V1 complex of vacuolar ATPase. V-ATPase vacuolar ATPase is responsible for acidifying a variety of intracellular compartments in eukaryotic cells. The polypeptide is V-type proton ATPase catalytic subunit A (VHA-A) (Arabidopsis thaliana (Mouse-ear cress)).